The sequence spans 535 residues: ABC1 family protein C10F6.14c (535 aa).

This sequence belongs to the protein kinase superfamily. ADCK protein kinase family.

This is ABC1 family protein C10F6.14c from Schizosaccharomyces pombe (strain 972 / ATCC 24843) (Fission yeast).